A 191-amino-acid chain; its full sequence is Putative glutathione-dependent formaldehyde-activating enzyme (191 aa).

Residues 20–166 (FPGGNLYCKC…FHSLGLETYD (147 aa)) enclose the CENP-V/GFA domain. C27, C29, C48, C50, C53, C95, and C98 together coordinate Zn(2+).

The protein belongs to the Gfa family. Requires Zn(2+) as cofactor.

It catalyses the reaction S-(hydroxymethyl)glutathione = glutathione + formaldehyde. It participates in one-carbon metabolism; formaldehyde degradation; formate from formaldehyde (glutathione route): step 1/3. In terms of biological role, catalyzes the condensation of formaldehyde and glutathione to S-hydroxymethylglutathione. This Aspergillus niger (strain ATCC MYA-4892 / CBS 513.88 / FGSC A1513) protein is Putative glutathione-dependent formaldehyde-activating enzyme.